Consider the following 101-residue polypeptide: Gamma-secretase subunit PEN-2 (101 aa).

Residues 1 to 17 (MNLERIPNEEKLSLCRR) lie on the Cytoplasmic side of the membrane. The helical intramembrane region spans 18–36 (YYLGGFAFLPFLWLVNILW). Over 37-57 (FFKEAFLKPAYTEQPQIKSYV) the chain is Cytoplasmic. The helical transmembrane segment at 58 to 78 (KKSALGLLLWVAVLTTWITVF) threads the bilayer. At 79-101 (QHFRAQWGEVGDYLSFTIPLGTA) the chain is on the lumenal side.

The protein belongs to the PEN-2 family. As to quaternary structure, the functional gamma-secretase complex is composed of at least four polypeptides: a presenilin homodimer (psen1 or psen2), nicastrin (ncstn), aph1 (aph1a or aph1b) and psenen.

It is found in the endoplasmic reticulum membrane. The protein localises to the golgi apparatus. Its subcellular location is the golgi stack membrane. It localises to the cell membrane. The protein resides in the membrane. Its function is as follows. Essential subunit of the gamma-secretase complex, an endoprotease complex that catalyzes the intramembrane cleavage of integral membrane proteins such as Notch receptors and APP (amyloid-beta precursor protein). The gamma-secretase complex plays a role in Notch and Wnt signaling cascades and regulation of downstream processes via its role in processing key regulatory proteins. The sequence is that of Gamma-secretase subunit PEN-2 (psenen) from Danio rerio (Zebrafish).